The sequence spans 100 residues: Urease subunit gamma 2 (100 aa).

Belongs to the urease gamma subunit family. In terms of assembly, heterotrimer of UreA (gamma), UreB (beta) and UreC (alpha) subunits. Three heterotrimers associate to form the active enzyme.

Its subcellular location is the cytoplasm. The catalysed reaction is urea + 2 H2O + H(+) = hydrogencarbonate + 2 NH4(+). It functions in the pathway nitrogen metabolism; urea degradation; CO(2) and NH(3) from urea (urease route): step 1/1. The polypeptide is Urease subunit gamma 2 (Psychrobacter cryohalolentis (strain ATCC BAA-1226 / DSM 17306 / VKM B-2378 / K5)).